Reading from the N-terminus, the 1031-residue chain is Serine-repeat antigen protein 6 (1031 aa).

The signal sequence occupies residues 1 to 24 (MICPIFFLYIINVLFTQYFIKCEG). Residue Asn74 is glycosylated (N-linked (GlcNAc...) asparagine). The span at 91–101 (KVVSSSESGKG) shows a compositional bias: low complexity. Residues 91 to 163 (KVVSSSESGK…TESSSETLNK (73 aa)) form a disordered region. Residues 104 to 139 (VSHTKVTSEGLSDTQPNVTQSVSSSTHTPGSLDSTM) show a composition bias toward polar residues. An N-linked (GlcNAc...) asparagine glycan is attached at Asn120. Residues 140–158 (STEQHSSVSQSSLPTESSS) show a composition bias toward low complexity. The N-linked (GlcNAc...) asparagine glycan is linked to Asn449. The tract at residues 490–567 (TLPSESPSES…GDTNYVYDFD (78 aa)) is disordered. The segment covering 492–505 (PSESPSESSSKSDS) has biased composition (low complexity). The segment covering 511–535 (NDKDKNEDKDDMSKNSKEEFKNDDK) has biased composition (basic and acidic residues). Residue Asn544 is glycosylated (N-linked (GlcNAc...) asparagine). Residues 554-564 (NINNGDTNYVY) are compositionally biased toward low complexity. An N-linked (GlcNAc...) asparagine glycan is attached at Asn573. Cys644 is an active-site residue. N-linked (GlcNAc...) asparagine glycosylation occurs at Asn674. Residues His810 and Asn835 contribute to the active site. 2 N-linked (GlcNAc...) asparagine glycosylation sites follow: Asn929 and Asn974.

It belongs to the peptidase C1 family. Just prior to merozoite egress from host erythrocytes, proteolytically cleaved by SUB1 to generate the active 75kDa form.

The protein resides in the parasitophorous vacuole lumen. Its subcellular location is the parasitophorous vacuole membrane. Functionally, cysteine protease which plays an essential role in merozoite egress from host erythrocytes. May cleave host SPTB/beta spectrin and ANK1/ankyrin-1 which disrupts host erythrocyte actin cytoskeleton and leads to host erythrocyte cell membrane rupture. The polypeptide is Serine-repeat antigen protein 6 (Plasmodium falciparum (isolate 3D7)).